Reading from the N-terminus, the 443-residue chain is Serine/threonine-protein kinase SSN3 (443 aa).

Residues 1–24 (MERKRGREMNPPSADPPSATPVAR) are disordered. Positions 54–384 (YKIVGFISSG…AEKALEHRYF (331 aa)) constitute a Protein kinase domain. ATP is bound by residues 60 to 68 (ISSGTYGRV) and Lys84. The active-site Proton acceptor is Asp185. The segment at 405 to 443 (RRVSQEDNDIRTSSLPGTKRSGLPDDSLMGRPAKRLKEG) is disordered.

The protein belongs to the protein kinase superfamily. CMGC Ser/Thr protein kinase family. CDC2/CDKX subfamily. Component of the srb8-11 complex, a regulatory module of the Mediator complex. It depends on Mg(2+) as a cofactor.

The protein localises to the nucleus. The catalysed reaction is L-seryl-[protein] + ATP = O-phospho-L-seryl-[protein] + ADP + H(+). The enzyme catalyses L-threonyl-[protein] + ATP = O-phospho-L-threonyl-[protein] + ADP + H(+). It carries out the reaction [DNA-directed RNA polymerase] + ATP = phospho-[DNA-directed RNA polymerase] + ADP + H(+). Component of the srb8-11 complex. The srb8-11 complex is a regulatory module of the Mediator complex which is itself dependent transcription. The srb8-11 complex may be involved in the transcriptional repression of a subset of genes regulated by Mediator. It may inhibit the association of the Mediator complex with RNA polymerase II to form the holoenzyme complex. The srb8-11 complex phosphorylates the C-terminal domain (CTD) of the largest subunit of RNA polymerase II. The polypeptide is Serine/threonine-protein kinase SSN3 (SSN3) (Phaeosphaeria nodorum (strain SN15 / ATCC MYA-4574 / FGSC 10173) (Glume blotch fungus)).